The primary structure comprises 941 residues: Glycine dehydrogenase (decarboxylating) (941 aa).

At lysine 692 the chain carries N6-(pyridoxal phosphate)lysine.

It belongs to the GcvP family. The glycine cleavage system is composed of four proteins: P, T, L and H. The cofactor is pyridoxal 5'-phosphate.

It carries out the reaction N(6)-[(R)-lipoyl]-L-lysyl-[glycine-cleavage complex H protein] + glycine + H(+) = N(6)-[(R)-S(8)-aminomethyldihydrolipoyl]-L-lysyl-[glycine-cleavage complex H protein] + CO2. The glycine cleavage system catalyzes the degradation of glycine. The P protein binds the alpha-amino group of glycine through its pyridoxal phosphate cofactor; CO(2) is released and the remaining methylamine moiety is then transferred to the lipoamide cofactor of the H protein. This is Glycine dehydrogenase (decarboxylating) from Mycobacterium tuberculosis (strain ATCC 25177 / H37Ra).